A 262-amino-acid polypeptide reads, in one-letter code: Putative outer membrane protein CPn_1034/CP_0818/CPj1034/CpB1074 (262 aa).

Positions 1-17 are cleaved as a signal peptide; it reads MKTWLFFTFLFSCSSFY.

It localises to the cell outer membrane. In Chlamydia pneumoniae (Chlamydophila pneumoniae), this protein is Putative outer membrane protein CPn_1034/CP_0818/CPj1034/CpB1074.